The primary structure comprises 360 residues: Lactosylceramide 4-alpha-galactosyltransferase (360 aa).

Residues Met-1 to Arg-30 are Cytoplasmic-facing. The chain crosses the membrane as a helical; Signal-anchor for type II membrane protein span at residues Val-31 to Trp-51. Over His-52–Leu-360 the chain is Lumenal. A DXD motif motif is present at residues Asp-199–Asp-201. Residues Asn-210 and Asn-316 are each glycosylated (N-linked (GlcNAc...) asparagine).

It belongs to the glycosyltransferase 32 family. As to expression, ubiquitous. Highly expressed in kidney, mesenteric lymph node, spleen and brain.

Its subcellular location is the golgi apparatus membrane. It carries out the reaction a beta-D-Gal-(1-&gt;4)-beta-D-Glc-(1&lt;-&gt;1)-Cer(d18:1(4E)) + UDP-alpha-D-galactose = a globoside Gb3Cer (d18:1(4E)) + UDP + H(+). It catalyses the reaction a beta-D-Gal-(1&lt;-&gt;1')-ceramide + UDP-alpha-D-galactose = alpha-D-Gal-(1-&gt;4)-beta-D-Gal-(1&lt;-&gt;1')-Cer + UDP + H(+). The protein operates within glycolipid biosynthesis. In terms of biological role, catalyzes the transfer of galactose from UDP-alpha-D-galactose to lactosylceramide/beta-D-galactosyl-(1-&gt;4)-beta-D-glucosyl-(1&lt;-&gt;1)-ceramide(d18:1(4E)) to produce globotriaosylceramide/globoside Gb3Cer (d18:1(4E)). Also able to transfer galactose to galactosylceramide/beta-D-Gal-(1&lt;-&gt;1')-Cer. Globoside Gb3Cer is a glycosphingolipid of the globo serie, one of the major types of neutral root structures of glycosphingolipids, that constitute a significant portion of mammalian cell membranes. The polypeptide is Lactosylceramide 4-alpha-galactosyltransferase (Rattus norvegicus (Rat)).